The following is a 272-amino-acid chain: Energy-coupling factor transporter ATP-binding protein EcfA1 (272 aa).

Positions 2 to 237 (IKVSDVCFSY…KNIIEKAKID (236 aa)) constitute an ABC transporter domain. 37–44 (GHNGSGKS) lines the ATP pocket.

Belongs to the ABC transporter superfamily. Energy-coupling factor EcfA family. In terms of assembly, forms a stable energy-coupling factor (ECF) transporter complex composed of 2 membrane-embedded substrate-binding proteins (S component), 2 ATP-binding proteins (A component) and 2 transmembrane proteins (T component).

The protein localises to the cell membrane. Its function is as follows. ATP-binding (A) component of a common energy-coupling factor (ECF) ABC-transporter complex. Unlike classic ABC transporters this ECF transporter provides the energy necessary to transport a number of different substrates. The protein is Energy-coupling factor transporter ATP-binding protein EcfA1 of Mesomycoplasma hyopneumoniae (strain 7448) (Mycoplasma hyopneumoniae).